The sequence spans 165 residues: MPEHLNARVEACYRQAEDFFQRTFPRPTVSFRLRGQKAGVAHLDENLLRFNPQLYRENREHFLEQTVAHEVAHLIAHQLFGPRIRPHGEEWQLIMRGIYGLPPDRCHTYAVKRRTATRYLYRCHCPEHNDFPFSAQRHNLVAKGRRYYCRRCKATLVFSGEVTRD.

The SprT-like domain occupies 10-157; sequence EACYRQAEDF…YCRRCKATLV (148 aa). H69 contributes to the Zn(2+) binding site. E70 is a catalytic residue. H73 provides a ligand contact to Zn(2+).

The protein belongs to the SprT family. The cofactor is Zn(2+).

The protein resides in the cytoplasm. This chain is Protein SprT, found in Pseudomonas paraeruginosa (strain DSM 24068 / PA7) (Pseudomonas aeruginosa (strain PA7)).